The following is a 501-amino-acid chain: MSKQVRVRFAPSPTGALHIGGVRTALFNYLFAKKHNGVFYLRIEDTDQNRFVPGAEKYILEALKWLGISPDETIGKNEKFGPYRQSERKHLYKQYADLLINSGWAYYAFDTSESLDTLRKITEAAGNTFIYNHTVRETLDNSLTNSPEKVAERIANGEDYVIRFKTPVNETLHLKDIIRGDIKFETNLLDDKVLFKSDGMPTYHLANIVDDHLMETSHVIRGEEWLPSMPLHVLLYRAFGWEAPEFAHLPLILKPVGNGKLSKRDGEKLGFPVFPLQWKTNEGTSLGYKENGFFPETVINFLAMLGWNDGTQQEIFSLEELVQKFDLNRIHKAGAKFDPEKNKWFNHQYLVKKEDSTLAELFLPILASKGIVTNLDYTTKVVALVKERAHFVNELWDLSDYFFIAPTSYDEKATKNWKEETPELMKQLIVVLNGIEDFTSLNIETIVKDWMTQNEIGMGKVMQPFRLSLVGKMMGPHLFDIIEMIGKKETINRIEKAIATL.

The 'HIGH' region motif lies at 11 to 21 (PSPTGALHIGG). A 'KMSKS' region motif is present at residues 260-264 (KLSKR). ATP is bound at residue K263.

It belongs to the class-I aminoacyl-tRNA synthetase family. Glutamate--tRNA ligase type 1 subfamily. In terms of assembly, monomer.

The protein localises to the cytoplasm. It catalyses the reaction tRNA(Glu) + L-glutamate + ATP = L-glutamyl-tRNA(Glu) + AMP + diphosphate. Its function is as follows. Catalyzes the attachment of glutamate to tRNA(Glu) in a two-step reaction: glutamate is first activated by ATP to form Glu-AMP and then transferred to the acceptor end of tRNA(Glu). This Flavobacterium psychrophilum (strain ATCC 49511 / DSM 21280 / CIP 103535 / JIP02/86) protein is Glutamate--tRNA ligase.